Reading from the N-terminus, the 605-residue chain is DNA primase (605 aa).

The CHC2-type zinc-finger motif lies at 38 to 62 (CPFHDEKTPSFTVSEDKQICHCFGC). Residues 260–341 (DEIVLLEGFM…NVFVIQLPSG (82 aa)) enclose the Toprim domain. Residues Glu266, Asp310, and Asp312 each contribute to the Mg(2+) site.

This sequence belongs to the DnaG primase family. Monomer. Interacts with DnaB. Requires Zn(2+) as cofactor. Mg(2+) is required as a cofactor.

The enzyme catalyses ssDNA + n NTP = ssDNA/pppN(pN)n-1 hybrid + (n-1) diphosphate.. RNA polymerase that catalyzes the synthesis of short RNA molecules used as primers for DNA polymerase during DNA replication. This chain is DNA primase, found in Staphylococcus aureus (strain Mu50 / ATCC 700699).